The following is a 288-amino-acid chain: Putative branched-chain-amino-acid aminotransferase (288 aa).

Lysine 146 is subject to N6-(pyridoxal phosphate)lysine.

It belongs to the class-IV pyridoxal-phosphate-dependent aminotransferase family. Pyridoxal 5'-phosphate is required as a cofactor.

It catalyses the reaction L-leucine + 2-oxoglutarate = 4-methyl-2-oxopentanoate + L-glutamate. It carries out the reaction L-isoleucine + 2-oxoglutarate = (S)-3-methyl-2-oxopentanoate + L-glutamate. The enzyme catalyses L-valine + 2-oxoglutarate = 3-methyl-2-oxobutanoate + L-glutamate. Its pathway is amino-acid biosynthesis; L-isoleucine biosynthesis; L-isoleucine from 2-oxobutanoate: step 4/4. It participates in amino-acid biosynthesis; L-leucine biosynthesis; L-leucine from 3-methyl-2-oxobutanoate: step 4/4. The protein operates within amino-acid biosynthesis; L-valine biosynthesis; L-valine from pyruvate: step 4/4. Its function is as follows. Acts on leucine, isoleucine and valine. This chain is Putative branched-chain-amino-acid aminotransferase (ilvE), found in Methanocaldococcus jannaschii (strain ATCC 43067 / DSM 2661 / JAL-1 / JCM 10045 / NBRC 100440) (Methanococcus jannaschii).